The following is a 1188-amino-acid chain: Adenomatous polyposis coli protein-related protein 1 (1188 aa).

The segment at 1–50 (MSSSSSDENETTIHRTGSNTGGSGIYSQPRAGSSKRTSNVRHDVSDVDDE) is disordered. Residues 1–486 (MSSSSSDENE…LSLRATRASP (486 aa)) form a required for interaction with bar-1 and hmp-2 region. An ARM repeat occupies 314–358 (NCLKVLASLLSPDARFTSLVDSATGILKYVSQYLANTSTHLELRS). The span at 579–588 (IQQQQQMQKA) shows a compositional bias: low complexity. Disordered regions lie at residues 579 to 624 (IQQQ…SMNP), 670 to 702 (TESE…DGAT), 726 to 751 (TPNG…GPSL), 778 to 952 (QSEM…TMRF), 1003 to 1092 (CSMI…LKDK), and 1157 to 1181 (YQKP…PNPK). The segment at 600 to 1188 (DLDIPTSTVM…NPKQMLVTIV (589 aa)) is required for interaction with pry-1. Polar residues-rich tracts occupy residues 604–624 (PTST…SMNP) and 677–701 (LTSQ…SDGA). Polar residues-rich tracts occupy residues 778–788 (QSEMPTSSSTP) and 800–811 (FSPTQKTTSSPA). Basic and acidic residues-rich tracts occupy residues 832–843 (RRQDASDADRLL) and 871–900 (EPER…DHNG). 4 stretches are compositionally biased toward polar residues: residues 909–929 (WSPQ…SSED), 937–946 (EPNSSTSGAA), 1014–1039 (QRNE…SASS), and 1164–1180 (GRNN…TPNP).

The protein belongs to the adenomatous polyposis coli (APC) family. As to quaternary structure, interacts (via N-terminus) with bar-1 and hmp-2; the interaction with hmp-2 is relatively weak. Interacts (via C-terminus) with pry-1 (via N-terminus). Probably associates with bar-1, gsk-3, pry-1 in a complex. In terms of tissue distribution, during the L1 stage, expressed in vulval precursor cells (P3-8.p), seam cells and excretory cells.

Its subcellular location is the cell junction. The protein resides in the adherens junction. The protein localises to the cytoplasm. It is found in the nucleus. In terms of biological role, has a role in endoderm cell specification and pharyngeal development. Required for the migration of epithelial cells, organization of the anterior seam cells and ceh-13 expression during embryo morphogenesis. Prevents hyperactivation of the Wnt signaling pathway during endoderm development, probably by preventing hmp-2 nuclear translocation. During larval development, apr-1 is required for expression of lin-39 in P3-8.p. Shown to negatively regulate Wnt signaling in vulval precursor cells. Has a role in cell division by establishing the polarity of the mother cell which forms the asymmetries of the daughter nuclei. During the L4 larval stage, it is required for the asymmetric division and self-renewal of seam cells. Thought to regulate export of wrm-1 from the nucleus possibly as part of a complex involving pry-1. The sequence is that of Adenomatous polyposis coli protein-related protein 1 from Caenorhabditis elegans.